A 759-amino-acid chain; its full sequence is TSK-associating protein 1 (759 aa).

Positions 1-29 are cleaved as a signal peptide; the sequence is MEIYTMKTNFLVLALSLCILLSSFHEVSC. The disordered stretch occupies residues 55-74; sequence GKDDEDQSAKIQSENQNNTT. Residues 63-74 are compositionally biased toward polar residues; sequence AKIQSENQNNTT. 10 EFE repeat repeats span residues 91–138, 139–176, 177–215, 216–254, 255–293, 294–329, 330–368, 369–407, 408–443, and 444–473; these read VGSV…DEEL, SAHR…DEEH, SAKR…DEEH, SAKR…DEEQ, SAKR…EEEH, AAKG…DKEH, FTAA…DDEQ, SAKR…NEEQ, SAKR…LEEE, and SAKR…DKEE. A 10 X approximate EFE repeat region spans residues 91-473; it reads VGSVSDESVG…GINAKADKEE (383 aa). 2 coiled-coil regions span residues 142-461 and 685-734; these read RQKM…FEEA and IKKL…AKDE. Disordered stretches follow at residues 154-184, 200-219, 271-332, and 393-414; these read EAAS…QSLL, QLKV…SAKR, AASK…HFTA, and LKAN…RKSM.

In terms of assembly, homomultimer. Interacts (via C-terminal domain) with GIP1, CSN1 (via N-terminal domain) and TSK (via TPR repeats). In terms of processing, binds calcium through the EFE repeats. As to expression, expressed preferentially in flowers and shoot apex.

The protein resides in the endoplasmic reticulum lumen. The protein localises to the nucleus envelope. Its subcellular location is the cytoplasm. Involved in seedling development in the dark. May be involved, when interacting with TSK, in the organization of spindle microtubules and may participate, when interacting with GIP1, in structural links between the nuclear envelope and the cytoskeleton. This chain is TSK-associating protein 1 (TSA1), found in Arabidopsis thaliana (Mouse-ear cress).